A 339-amino-acid polypeptide reads, in one-letter code: 5-dehydro-2-deoxygluconokinase (339 aa).

The protein belongs to the carbohydrate kinase PfkB family.

The enzyme catalyses 5-dehydro-2-deoxy-D-gluconate + ATP = 6-phospho-5-dehydro-2-deoxy-D-gluconate + ADP + H(+). It functions in the pathway polyol metabolism; myo-inositol degradation into acetyl-CoA; acetyl-CoA from myo-inositol: step 5/7. In terms of biological role, catalyzes the phosphorylation of 5-dehydro-2-deoxy-D-gluconate (2-deoxy-5-keto-D-gluconate or DKG) to 6-phospho-5-dehydro-2-deoxy-D-gluconate (DKGP). The protein is 5-dehydro-2-deoxygluconokinase of Clostridium tetani (strain Massachusetts / E88).